The following is a 131-amino-acid chain: Small ribosomal subunit protein uS8 (131 aa).

It belongs to the universal ribosomal protein uS8 family. Part of the 30S ribosomal subunit. Contacts proteins S5 and S12.

One of the primary rRNA binding proteins, it binds directly to 16S rRNA central domain where it helps coordinate assembly of the platform of the 30S subunit. This Acidovorax sp. (strain JS42) protein is Small ribosomal subunit protein uS8.